A 274-amino-acid chain; its full sequence is Orotidine 5'-phosphate decarboxylase (274 aa).

K95 (proton donor) is an active-site residue.

Belongs to the OMP decarboxylase family. Type 2 subfamily.

The catalysed reaction is orotidine 5'-phosphate + H(+) = UMP + CO2. Its pathway is pyrimidine metabolism; UMP biosynthesis via de novo pathway; UMP from orotate: step 2/2. This is Orotidine 5'-phosphate decarboxylase from Mycobacterium avium (strain 104).